Reading from the N-terminus, the 332-residue chain is Galactosylgalactosylxylosylprotein 3-beta-glucuronosyltransferase 1 (332 aa).

Residues 1 to 6 (MPKRRD) are Cytoplasmic-facing. The essential for transport from endoplasmic reticulum to Golgi apparatus and interaction with SAR1A stretch occupies residues 3 to 5 (KRR). A helical; Signal-anchor for type II membrane protein membrane pass occupies residues 7–27 (ILAIVLIVLPWTLLITVWHQS). The Lumenal portion of the chain corresponds to 28 to 332 (TLAPLLAVHK…KGFTDPSVEI (305 aa)). 91-93 (PTY) lines the UDP-alpha-D-glucuronate pocket. 2 positions are modified to phosphothreonine: T103 and T108. D122 is a binding site for UDP-alpha-D-glucuronate. N-linked (GlcNAc...) asparagine glycosylation occurs at N140. The UDP-alpha-D-glucuronate site is built by R165 and R170. N184 carries an N-linked (GlcNAc...) asparagine glycan. Residue 195–197 (DDD) participates in UDP-alpha-D-glucuronate binding. D197 serves as a coordination point for Mn(2+). The tract at residues 243–252 (FDPHRPFAID) is interaction with galactose moiety of substrate glycoprotein. The active-site Proton donor/acceptor is E282. N-linked (GlcNAc...) asparagine glycosylation occurs at N301. A UDP-alpha-D-glucuronate-binding site is contributed by 309–311 (HTR).

It belongs to the glycosyltransferase 43 family. In terms of assembly, homodimer. Interacts with SAR1A. It depends on Mn(2+) as a cofactor. Post-translationally, the soluble form derives from the membrane form by proteolytic processing.

The protein localises to the golgi apparatus membrane. It localises to the secreted. The catalysed reaction is 3-O-(beta-D-galactosyl-(1-&gt;3)-beta-D-galactosyl-(1-&gt;4)-beta-D-xylosyl)-L-seryl-[protein] + UDP-alpha-D-glucuronate = 3-O-(beta-D-GlcA-(1-&gt;3)-beta-D-Gal-(1-&gt;3)-beta-D-Gal-(1-&gt;4)-beta-D-Xyl)-L-seryl-[protein] + UDP + H(+). It functions in the pathway protein modification; protein glycosylation. Involved in the biosynthesis of L2/HNK-1 carbohydrate epitope on glycoproteins. Can also play a role in glycosaminoglycan biosynthesis. Substrates include asialo-orosomucoid (ASOR), asialo-fetuin, and asialo-neural cell adhesion molecule. Requires sphingomyelin for activity: stearoyl-sphingomyelin was the most effective, followed by palmitoyl-sphingomyelin and lignoceroyl-sphingomyelin. Activity was demonstrated only for sphingomyelin with a saturated fatty acid and not for that with an unsaturated fatty acid, regardless of the length of the acyl group. The protein is Galactosylgalactosylxylosylprotein 3-beta-glucuronosyltransferase 1 of Pan troglodytes (Chimpanzee).